The primary structure comprises 79 residues: Sulfur carrier protein TusA (79 aa).

The active-site Cysteine persulfide intermediate is the cysteine 17.

Belongs to the sulfur carrier protein TusA family.

It is found in the cytoplasm. In terms of biological role, sulfur carrier protein which probably makes part of a sulfur-relay system. The protein is Sulfur carrier protein TusA of Pasteurella multocida (strain Pm70).